We begin with the raw amino-acid sequence, 203 residues long: Outer-membrane lipoprotein carrier protein (203 aa).

An N-terminal signal peptide occupies residues 1–21 (MKKLAITCALLSGMVVSQVWA).

It belongs to the LolA family. Monomer.

It is found in the periplasm. In terms of biological role, participates in the translocation of lipoproteins from the inner membrane to the outer membrane. Only forms a complex with a lipoprotein if the residue after the N-terminal Cys is not an aspartate (The Asp acts as a targeting signal to indicate that the lipoprotein should stay in the inner membrane). The chain is Outer-membrane lipoprotein carrier protein from Klebsiella pneumoniae subsp. pneumoniae (strain ATCC 700721 / MGH 78578).